Here is a 452-residue protein sequence, read N- to C-terminus: Agmatine coumaroyltransferase (452 aa).

Catalysis depends on proton acceptor residues H163 and D396.

This sequence belongs to the plant acyltransferase family.

It catalyses the reaction 4-coumaroyl-CoA + agmatine = N-(4-guanidinobutyl)-4-hydroxycinnamamide + CoA + H(+). Its function is as follows. Involved in the biosynthesis of hydroxycinnamic acid amides, which play a role in defense against pathogens. Agmatine is the preferred acyl acceptor, lower activity is observed towards putrescine. The preferred acyl donor is p-coumaroyl-CoA, lower activity is seen towards feruloyl-CoA. The chain is Agmatine coumaroyltransferase from Arabidopsis thaliana (Mouse-ear cress).